The primary structure comprises 332 residues: Adenosine deaminase (332 aa).

Zn(2+) is bound by residues His12 and His14. His14, Asp16, and Gly170 together coordinate substrate. Residue His197 coordinates Zn(2+). Glu200 acts as the Proton donor in catalysis. A Zn(2+)-binding site is contributed by Asp278. Asp279 lines the substrate pocket.

The protein belongs to the metallo-dependent hydrolases superfamily. Adenosine and AMP deaminases family. Adenosine deaminase subfamily. Requires Zn(2+) as cofactor.

It catalyses the reaction adenosine + H2O + H(+) = inosine + NH4(+). The catalysed reaction is 2'-deoxyadenosine + H2O + H(+) = 2'-deoxyinosine + NH4(+). Catalyzes the hydrolytic deamination of adenosine and 2-deoxyadenosine. The chain is Adenosine deaminase from Serratia proteamaculans (strain 568).